We begin with the raw amino-acid sequence, 368 residues long: MNLPIEQYADLLAEKAKNLTALLAPFNPPELEVFESETGHFRMRAEFRVWHDTNEVGENELYHIMFDQETKQRYCVEQFPIANHLINKMMSSLLAEIKGNELLTRKLFQVDYLSTLSGEIAVSMLYHKKLNEEWQAEAAALKARLEHQGFKVQIIGRATKQKIALDRDYVEEVLPVDGRNLIYRQVENSFTQPNAKMNIKMLEWARSCTRHSSGDLLELYCGNGNFSIALAENFRKVLATEISKSSVQSAQYNIEQNGIDNLQIIRMSAEEFTQAMNGVREFNRLKGIDLKAYDCNTIFVDPPRAGLDQDTLNMVQAYERILYISCNPYTLAENLRQLSLTHRIERAALFDQFPYTHHVESGVWLIRK.

Residues Gln192, Tyr220, Asn225, Glu241, and Asp301 each contribute to the S-adenosyl-L-methionine site. Cys326 (nucleophile) is an active-site residue. Glu360 acts as the Proton acceptor in catalysis.

Belongs to the class I-like SAM-binding methyltransferase superfamily. RNA M5U methyltransferase family. TrmA subfamily.

It carries out the reaction uridine(54) in tRNA + S-adenosyl-L-methionine = 5-methyluridine(54) in tRNA + S-adenosyl-L-homocysteine + H(+). It catalyses the reaction uridine(341) in tmRNA + S-adenosyl-L-methionine = 5-methyluridine(341) in tmRNA + S-adenosyl-L-homocysteine + H(+). Functionally, dual-specificity methyltransferase that catalyzes the formation of 5-methyluridine at position 54 (m5U54) in all tRNAs, and that of position 341 (m5U341) in tmRNA (transfer-mRNA). The polypeptide is tRNA/tmRNA (uracil-C(5))-methyltransferase (Actinobacillus pleuropneumoniae serotype 5b (strain L20)).